A 547-amino-acid polypeptide reads, in one-letter code: Signal recognition particle receptor subunit alpha homolog (547 aa).

The disordered stretch occupies residues 124 to 174; that stretch reads LENETDTKSLPVEANNDNSARKKNEYEMKKKGAQSKQTNAPKKGKKQLRKW. Residues 142–153 are compositionally biased toward basic and acidic residues; it reads SARKKNEYEMKK. An NG domain region spans residues 343–546; that stretch reads YTISLIGVNG…SVDWVVDQLM (204 aa). GTP-binding positions include 349–356, 437–441, and 498–501; these read GVNGVGKS, DTAGR, and SKVD.

It belongs to the GTP-binding SRP family. In terms of assembly, heterodimer of an alpha and a beta chain.

It is found in the endoplasmic reticulum membrane. Its function is as follows. Component of the SRP (signal recognition particle) receptor (SR). Ensures, in conjunction with the signal recognition particle, the correct targeting of the nascent secretory proteins to the endoplasmic reticulum membrane system. GTP hydrolysis may enhance the fidelity of and provide unidirectionality to the targeting reaction. The sequence is that of Signal recognition particle receptor subunit alpha homolog (srp101) from Schizosaccharomyces pombe (strain 972 / ATCC 24843) (Fission yeast).